The following is a 73-amino-acid chain: Translation initiation factor IF-1 (73 aa).

The S1-like domain maps to 1 to 73 (MSEKEAGIEV…SRGRITYRDK (73 aa)).

Belongs to the IF-1 family. As to quaternary structure, component of the 30S ribosomal translation pre-initiation complex which assembles on the 30S ribosome in the order IF-2 and IF-3, IF-1 and N-formylmethionyl-tRNA(fMet); mRNA recruitment can occur at any time during PIC assembly.

It localises to the cytoplasm. In terms of biological role, one of the essential components for the initiation of protein synthesis. Stabilizes the binding of IF-2 and IF-3 on the 30S subunit to which N-formylmethionyl-tRNA(fMet) subsequently binds. Helps modulate mRNA selection, yielding the 30S pre-initiation complex (PIC). Upon addition of the 50S ribosomal subunit IF-1, IF-2 and IF-3 are released leaving the mature 70S translation initiation complex. The sequence is that of Translation initiation factor IF-1 from Anaeromyxobacter dehalogenans (strain 2CP-C).